The following is a 45-amino-acid chain: Bomanin Short 1 (45 aa).

A signal peptide spans 1–20; that stretch reads MKFFSVVTVFVLGLLAVANA. The propeptide at 21-27 is removed by a dipeptidylpeptidase; it reads VPLSPDP. The cysteines at positions 36 and 39 are disulfide-linked. G43 carries the post-translational modification Glycine amide.

Hemolymph (at protein level).

It is found in the secreted. Secreted immune-induced peptide induced by Toll signaling. Has a role in resistance to bacterial and fungal infections. Has no activity against the fungus C.glabrata in vitro. The protein is Bomanin Short 1 of Drosophila melanogaster (Fruit fly).